Here is a 236-residue protein sequence, read N- to C-terminus: MAAGLGVKAAPFTYVAHALAVAAAVMVLVWCISFRGGLAFEADNKNLIFNVHPVLMLIGYIILGSEAIMIYKIFPKLNHDTTKLIHLILHAIAIVLGAVGIYCAFKFHNESGIANLYSLHSWLGIGTISLYGIQWIFGFVAFFYPGAAPHVRRGALPWHVLFGLFVYVLTLATAELGLLEKLTFLQSSGLDKYGAEAFLVNFTGLVVALFGAAVVVAAVAPAHVEEPEGYAPIPVN.

Residues 1-11 (MAAGLGVKAAP) are Cytoplasmic-facing. Residues 12–32 (FTYVAHALAVAAAVMVLVWCI) form a helical membrane-spanning segment. The 205-residue stretch at 15–219 (VAHALAVAAA…FGAAVVVAAV (205 aa)) folds into the Cytochrome b561 domain. Over 33–53 (SFRGGLAFEADNKNLIFNVHP) the chain is Extracellular. His52 lines the heme b pocket. A helical transmembrane segment spans residues 54–74 (VLMLIGYIILGSEAIMIYKIF). Residue 67–75 (AIMIYKIFP) coordinates L-ascorbate. The Cytoplasmic segment spans residues 75–84 (PKLNHDTTKL). The helical transmembrane segment at 85–105 (IHLILHAIAIVLGAVGIYCAF) threads the bilayer. The heme b site is built by His86 and His120. Residues 106-122 (KFHNESGIANLYSLHSW) lie on the Extracellular side of the membrane. Monodehydro-L-ascorbate radical is bound at residue 116–125 (LYSLHSWLGI). Residues 123–143 (LGIGTISLYGIQWIFGFVAFF) form a helical membrane-spanning segment. Over 144–153 (YPGAAPHVRR) the chain is Cytoplasmic. A helical membrane pass occupies residues 154 to 174 (GALPWHVLFGLFVYVLTLATA). His159 provides a ligand contact to heme b. The Extracellular portion of the chain corresponds to 175 to 196 (ELGLLEKLTFLQSSGLDKYGAE). The helical transmembrane segment at 197 to 217 (AFLVNFTGLVVALFGAAVVVA) threads the bilayer. Residues 218–236 (AVAPAHVEEPEGYAPIPVN) lie on the Cytoplasmic side of the membrane.

Heme b is required as a cofactor.

It localises to the membrane. Functionally, two-heme-containing cytochrome. Catalyzes ascorbate-dependent trans-membrane electron transfer by utilizing a concerted H(+)/e(-) transfer mechanism. The protein is Probable ascorbate-specific transmembrane electron transporter 2 of Oryza sativa subsp. japonica (Rice).